The chain runs to 569 residues: Laccase-6 (569 aa).

The first 29 residues, 1–29, serve as a signal peptide directing secretion; that stretch reads MTSSAVPSLFRLSFLLFTLQVMNIGRIGA. Plastocyanin-like domains are found at residues 37–153 and 163–315; these read KVQT…PKAS and NEHT…YIGA. N-linked (GlcNAc...) asparagine glycosylation is present at Asn-83. Positions 87, 89, 132, and 134 each coordinate Cu cation. Asn-208, Asn-303, Asn-319, Asn-392, Asn-438, and Asn-444 each carry an N-linked (GlcNAc...) asparagine glycan. Residues 417–553 form the Plastocyanin-like 3 domain; the sequence is DFPTTPEKAY…STMFIVKNGK (137 aa). 8 residues coordinate Cu cation: His-472, His-475, His-477, His-532, Cys-533, His-534, His-538, and Met-543.

It belongs to the multicopper oxidase family. The cofactor is Cu cation. Predominantly expressed in the inflorescence stem, but not in siliques.

It is found in the secreted. The protein localises to the extracellular space. Its subcellular location is the apoplast. It carries out the reaction 4 hydroquinone + O2 = 4 benzosemiquinone + 2 H2O. Functionally, lignin degradation and detoxification of lignin-derived products. This chain is Laccase-6 (LAC6), found in Arabidopsis thaliana (Mouse-ear cress).